The primary structure comprises 1412 residues: MPN domain-containing protein CG4751 (1412 aa).

A compositionally biased stretch (basic and acidic residues) spans 1-10 (MENGVEHGVD). The disordered stretch occupies residues 1–123 (MENGVEHGVD…TKENYEGFNG (123 aa)). 2 stretches are compositionally biased toward acidic residues: residues 23-35 (GEGD…EVEG) and 103-114 (SDAGDEDNDDET). An RAMA domain is found at 113–219 (ETKENYEGFN…AYKNTYLRKC (107 aa)). The MPN domain occupies 284–420 (ITVNSSALLL…LESVVKCIWI (137 aa)). Positions 361, 363, and 374 each coordinate Zn(2+). Disordered regions lie at residues 554-589 (INPP…QKAS), 669-734 (SALN…DIAR), 853-891 (GGSG…NSYK), 1027-1066 (SIPP…QQQQ), 1271-1318 (MKPP…NSGG), 1330-1376 (SSVP…SGGV), and 1389-1412 (LAAP…LSHD). Residues 572-600 (SGRKAEEESNAQAEQKASELKVMSLQEQL) adopt a coiled-coil conformation. Residues serine 699, serine 701, serine 705, serine 719, serine 723, and serine 728 each carry the phosphoserine modification. Over residues 702-720 (PAKSDTSSHASTSRTRNSP) the composition is skewed to polar residues. 2 stretches are compositionally biased toward low complexity: residues 873–891 (KSSS…NSYK) and 1036–1066 (SSGS…QQQQ). The segment covering 1275 to 1290 (KSTTPSSARTRESSAS) has biased composition (polar residues). Residues serine 1288 and serine 1290 each carry the phosphoserine modification. Threonine 1297 carries the phosphothreonine modification. Low complexity predominate over residues 1360-1370 (LYGELAPPGAL).

This sequence belongs to the peptidase M67 family.

In terms of biological role, probable protease. The protein is MPN domain-containing protein CG4751 of Drosophila melanogaster (Fruit fly).